The sequence spans 104 residues: Protein RnfH (104 aa).

This sequence belongs to the UPF0125 (RnfH) family.

This Pseudomonas fluorescens (strain Pf0-1) protein is Protein RnfH.